Reading from the N-terminus, the 197-residue chain is Adenylate kinase (197 aa).

16–21 lines the ATP pocket; sequence GAGKGT. Residues 36–65 form an NMP region; it reads STGDILRDHVARGTALGQRVKPILDAGQLV. AMP contacts are provided by residues threonine 37, arginine 42, 63 to 65, 90 to 93, and glutamine 97; these read QLV and GFPR. Residues 131 to 147 form an LID region; it reads ERGRQAALRGEPVRSDD. Residue arginine 132 coordinates ATP. The AMP site is built by arginine 144 and arginine 155. Glycine 183 lines the ATP pocket.

Belongs to the adenylate kinase family. Monomer.

The protein localises to the cytoplasm. It carries out the reaction AMP + ATP = 2 ADP. The protein operates within purine metabolism; AMP biosynthesis via salvage pathway; AMP from ADP: step 1/1. Its function is as follows. Catalyzes the reversible transfer of the terminal phosphate group between ATP and AMP. Plays an important role in cellular energy homeostasis and in adenine nucleotide metabolism. This is Adenylate kinase from Deinococcus geothermalis (strain DSM 11300 / CIP 105573 / AG-3a).